A 340-amino-acid chain; its full sequence is Zinc finger protein 367 (340 aa).

The interval 96-140 is disordered; that stretch reads LPTLRGAPPSSASVAAVSGGEDEEEASSPDSGHLKDGIRRGRPRA. Residues 101 to 114 are compositionally biased toward low complexity; it reads GAPPSSASVAAVSG. The span at 127–140 shows a compositional bias: basic and acidic residues; it reads GHLKDGIRRGRPRA. 2 C2H2-type zinc fingers span residues 157–179 and 185–209; these read IRCNICNRVFPREKSLQAHKRTH and YLCDYPDCGKAFVQSGQLKTHQRLH. The interval 280 to 317 is disordered; it reads KGKLVQKADQEQQDPLEYLQSDEEDDEKSGAQRRLQEQ. Residues 299 to 332 adopt a coiled-coil conformation; sequence QSDEEDDEKSGAQRRLQEQRERLHGALALIELAN. Ser300 bears the Phosphoserine mark. Residues 307–317 show a composition bias toward basic and acidic residues; it reads KSGAQRRLQEQ.

It belongs to the krueppel C2H2-type zinc-finger protein family.

Its subcellular location is the nucleus. Transcriptional activator. May be involved in transcriptional activation of erythroid genes. This is Zinc finger protein 367 (Znf367) from Rattus norvegicus (Rat).